Here is a 716-residue protein sequence, read N- to C-terminus: Protein C-mannosyl-transferase DPY19L3 (716 aa).

Topologically, residues 1–43 (MMSIRQRREIRATEVSEDFPAQEENVKLENKLPSGCTSRRLWK) are cytoplasmic. A helical membrane pass occupies residues 44–64 (ILSLTIGGTIALCIGLLTSVY). Residues 65 to 154 (LATLHENDLW…RVLPVQKYLE (90 aa)) lie on the Lumenal side of the membrane. N-linked (GlcNAc...) asparagine glycosylation is present at Asn118. The helical transmembrane segment at 155–182 (PVYFYIYTLFGLQAIYVTALYITSWLLS) threads the bilayer. The Cytoplasmic portion of the chain corresponds to 183–184 (GT). Positions 185-197 (WLSGLLAAFWYVT) form an intramembrane region, name=3. Topologically, residues 198 to 215 (NRIDTTRVEFTIPLRENW) are cytoplasmic. The segment at residues 216 to 230 (ALPFFAIQIAAITYF) is an intramembrane region (name=4). Residues 231–239 (LRPNLQPLS) are Cytoplasmic-facing. A helical membrane pass occupies residues 240–256 (ERLTLLAIFISTFLFSL). Over 257-262 (TWQFNQ) the chain is Lumenal. Residues 263–279 (FMMLMQALVLFTLDSLD) traverse the membrane as a helical segment. Over 280 to 289 (MLPAVKATWL) the chain is Cytoplasmic. A helical membrane pass occupies residues 290-306 (YGIQITSLLLVCILQFF). At 307-308 (NS) the chain is on the lumenal side. A helical transmembrane segment spans residues 309 to 323 (MILGSLLISFNLSVF). Over 324-338 (IARKLQKNLKTGSFL) the chain is Cytoplasmic. A helical transmembrane segment spans residues 339–359 (NRLGKLLLHLFMVLCLTLFLN). The Lumenal portion of the chain corresponds to 360–414 (NIIKKILNLKSDEHIFKFLKAKFGLGATRDFDANLYLCEEAFGLLPFNTFGRLSD). A helical transmembrane segment spans residues 415–437 (TLLFYAYIFVLSITVIVAFVVAF). At 438 to 465 (HNLSDSTNQQSVGKMEKGTVDLKPETAY) the chain is on the cytoplasmic side. Residues 466 to 485 (NLIHTILFGFLALSTMRMKY) form a helical membrane-spanning segment. Residues 486–487 (LW) are Lumenal-facing. The chain crosses the membrane as a helical span at residues 488–499 (TSHMCVFASFGL). Over 500 to 522 (CSPEIWELLLKSVHLYNPKRICI) the chain is Cytoplasmic. A helical membrane pass occupies residues 523–539 (MRYSVPILILLYLCYKF). At 540–716 (WPGMMDELSE…FHVYKLSRNK (177 aa)) the chain is on the lumenal side. The N-linked (GlcNAc...) asparagine glycan is linked to Asn704.

This sequence belongs to the dpy-19 family.

It is found in the endoplasmic reticulum membrane. It carries out the reaction L-tryptophyl-[protein] + a di-trans,poly-cis-dolichyl beta-D-mannosyl phosphate = C-alpha-D-mannosyl-L-tryptophyl-[protein] + a di-trans,poly-cis-dolichyl phosphate + H(+). The protein operates within protein modification; protein glycosylation. Functionally, C-mannosyltransferase that mediates C-mannosylation of tryptophan residues on target proteins. The reaction occurs on the luminal side of the endoplasmic reticulum and involves the transfer of a mannose unit from a dolichylphosphate mannose (Dol-P-Man) donor to an acceptor protein containing a WxxW or WxxC consensus sequence. C-mannosylates RSPO1, a Wnt signaling regulator, preferentially at the first Trp residue in the sequence WxxW. C-mannosylates the netrin receptor UNC5A, preferentially at the third tryptophan of WxxWxxWxxC sequence. The polypeptide is Protein C-mannosyl-transferase DPY19L3 (DPY19L3) (Pongo abelii (Sumatran orangutan)).